We begin with the raw amino-acid sequence, 92 residues long: Cell division protein FtsB (92 aa).

Over 1–3 the chain is Cytoplasmic; the sequence is MKW. Residues 4-21 form a helical membrane-spanning segment; that stretch reads VTVVLSFALVCCQYSLWF. The Periplasmic segment spans residues 22–92; it reads GKGSIGRNSS…TFYRLIRHNR (71 aa). Residues 28-50 adopt a coiled-coil conformation; the sequence is RNSSLREQIAVQEEKNQTLALRN.

It belongs to the FtsB family. Part of a complex composed of FtsB, FtsL and FtsQ.

It is found in the cell inner membrane. Its function is as follows. Essential cell division protein. May link together the upstream cell division proteins, which are predominantly cytoplasmic, with the downstream cell division proteins, which are predominantly periplasmic. This chain is Cell division protein FtsB, found in Neisseria meningitidis serogroup C (strain 053442).